A 155-amino-acid chain; its full sequence is RING finger protein 122 (155 aa).

The chain crosses the membrane as a helical span at residues 40-60 (VIFGTGIFVFMLSLIFCCYFI). The RING-type; atypical zinc-finger motif lies at 93-134 (CAVCLEDFKGKDELGVLPCQHAFHRKCLVKWLEVRCVCPMCN).

Widely expressed in several tissues and cell lines.

It localises to the golgi apparatus. Its subcellular location is the endoplasmic reticulum. The protein localises to the membrane. In terms of biological role, may induce necrosis and apoptosis. May play a role in cell viability. This Homo sapiens (Human) protein is RING finger protein 122 (RNF122).